Reading from the N-terminus, the 385-residue chain is Effector protein hopAB3 (385 aa).

3 disordered regions span residues 1 to 61 (MVGI…AGRP), 73 to 139 (TREW…SPLY), and 215 to 293 (ADSQ…PRIN). The tract at residues 1 to 333 (MVGISGRAGP…INMEDLRAAL (333 aa)) is host recognition. A compositionally biased stretch (low complexity) spans 217–234 (SQQAARAPARTPPRSSVR). Composition is skewed to polar residues over residues 245 to 256 (ATESSSGSNQRS) and 265 to 283 (MTSNQRRPSSASNASTSQR).

This sequence belongs to the HopAB family. In terms of assembly, interacts physically with plant cell Pto.

Its subcellular location is the secreted. In terms of biological role, effector protein involved in gene-for-gene resistance in tomato plants. It is recognized by the host Pto resistance protein and elicits Pto and Prf-dependent hypersensitive response (HR) and programmed cell death (PCD), resulting in host immunity. In susceptible plants, promotes virulence, in part, by enhancing the development of disease symptoms and bacterial growth. In Pseudomonas syringae pv. maculicola, this protein is Effector protein hopAB3 (hopAB3).